The sequence spans 304 residues: MVITRDFFLFLSKSGFLNKMARNWGSRIAAGKIIGGNDFNSSIPTIRQLNSQGLSVTVDHLGEFVNSAEVARERTEECIQTIATIADQELNSHVSLKMTSLGLDIDMDLVYENMTKILQTAEKHKIMVTIDMEDEVRCQKTLDIFKDFRKKYEHVSTVLQAYLYRTEKDIDDLDSLNPFLRLVKGAYKESEKVAFPEKSDVDENYKKIIRKQLLNGHYTAIATHDDKMIDFTKQLAKEHGIANDKFEFQMLYGMRSQTQLSLVKEGYNMRVFLPYGEDWYGYFMRRLAERPSNIAFAFKGMTKK.

A substrate-binding site is contributed by lysine 97. Aspartate 131 is a catalytic residue. FAD is bound by residues methionine 132 and glutamine 160. Residue arginine 181 is part of the active site. FAD contacts are provided by residues 184–186 (KGA) and 223–224 (TH). 285–286 (RR) is a binding site for substrate.

It belongs to the proline dehydrogenase family. FAD is required as a cofactor.

The catalysed reaction is L-proline + a quinone = (S)-1-pyrroline-5-carboxylate + a quinol + H(+). The protein operates within amino-acid degradation; L-proline degradation into L-glutamate; L-glutamate from L-proline: step 1/2. Converts proline to delta-1-pyrroline-5-carboxylate. The protein is Proline dehydrogenase 2 of Bacillus subtilis subsp. natto.